The primary structure comprises 120 residues: Large ribosomal subunit protein uL22 (120 aa).

Belongs to the universal ribosomal protein uL22 family. As to quaternary structure, part of the 50S ribosomal subunit.

In terms of biological role, this protein binds specifically to 23S rRNA; its binding is stimulated by other ribosomal proteins, e.g. L4, L17, and L20. It is important during the early stages of 50S assembly. It makes multiple contacts with different domains of the 23S rRNA in the assembled 50S subunit and ribosome. Functionally, the globular domain of the protein is located near the polypeptide exit tunnel on the outside of the subunit, while an extended beta-hairpin is found that lines the wall of the exit tunnel in the center of the 70S ribosome. This chain is Large ribosomal subunit protein uL22, found in Crocosphaera subtropica (strain ATCC 51142 / BH68) (Cyanothece sp. (strain ATCC 51142)).